Reading from the N-terminus, the 255-residue chain is tRNA (guanine-N(1)-)-methyltransferase (255 aa).

S-adenosyl-L-methionine contacts are provided by residues Gly-113 and 133–138; that span reads IGDYVL.

It belongs to the RNA methyltransferase TrmD family. As to quaternary structure, homodimer.

It is found in the cytoplasm. The enzyme catalyses guanosine(37) in tRNA + S-adenosyl-L-methionine = N(1)-methylguanosine(37) in tRNA + S-adenosyl-L-homocysteine + H(+). In terms of biological role, specifically methylates guanosine-37 in various tRNAs. The chain is tRNA (guanine-N(1)-)-methyltransferase from Enterobacter sp. (strain 638).